The sequence spans 202 residues: Na(+)-translocating NADH-quinone reductase subunit E (202 aa).

Transmembrane regions (helical) follow at residues 11-31 (AVFVENMALAFFLGMCTFIAI), 35-55 (VETAIGLGIAVIVVQTITVPA), 81-101 (FLGLLSYIGVIAAIVQILEML), 114-134 (GVFLPLITVNCAIMAGSLFMV), 144-164 (TVYGVGSGFSWALAIAALAGI), and 180-200 (LGITFITIGLMSLGFMSFSGV).

It belongs to the NqrDE/RnfAE family. Composed of six subunits; NqrA, NqrB, NqrC, NqrD, NqrE and NqrF.

It is found in the cell inner membrane. It catalyses the reaction a ubiquinone + n Na(+)(in) + NADH + H(+) = a ubiquinol + n Na(+)(out) + NAD(+). In terms of biological role, NQR complex catalyzes the reduction of ubiquinone-1 to ubiquinol by two successive reactions, coupled with the transport of Na(+) ions from the cytoplasm to the periplasm. NqrA to NqrE are probably involved in the second step, the conversion of ubisemiquinone to ubiquinol. This chain is Na(+)-translocating NADH-quinone reductase subunit E, found in Pseudomonas aeruginosa (strain LESB58).